We begin with the raw amino-acid sequence, 341 residues long: S-adenosylmethionine:tRNA ribosyltransferase-isomerase (341 aa).

The protein belongs to the QueA family. Monomer.

Its subcellular location is the cytoplasm. It catalyses the reaction 7-aminomethyl-7-carbaguanosine(34) in tRNA + S-adenosyl-L-methionine = epoxyqueuosine(34) in tRNA + adenine + L-methionine + 2 H(+). It functions in the pathway tRNA modification; tRNA-queuosine biosynthesis. Its function is as follows. Transfers and isomerizes the ribose moiety from AdoMet to the 7-aminomethyl group of 7-deazaguanine (preQ1-tRNA) to give epoxyqueuosine (oQ-tRNA). The sequence is that of S-adenosylmethionine:tRNA ribosyltransferase-isomerase from Clostridium botulinum (strain Loch Maree / Type A3).